Consider the following 327-residue polypeptide: Malate dehydrogenase (327 aa).

An NAD(+)-binding site is contributed by 11 to 17 (GAAGNIS). Arg-92 and Arg-98 together coordinate substrate. Residues Asn-105, Gln-112, and 129-131 (VGN) each bind NAD(+). 2 residues coordinate substrate: Asn-131 and Arg-162. His-187 functions as the Proton acceptor in the catalytic mechanism. The segment at 304-327 (SQEKMKATEQELSEERDAVEHLLP) is disordered.

The protein belongs to the LDH/MDH superfamily. MDH type 2 family.

It catalyses the reaction (S)-malate + NAD(+) = oxaloacetate + NADH + H(+). Catalyzes the reversible oxidation of malate to oxaloacetate. The chain is Malate dehydrogenase from Psychrobacter sp. (strain PRwf-1).